A 361-amino-acid polypeptide reads, in one-letter code: MKQVTVALLFGGRSAEHEISIISAQSVARHINPDHYRVVPIYITRNGRWYSEGIASSILELDIAALIRKSGTAAASLKLQEMVLASGQQPFSFTFAGIDIAFPILHGSYGEDGRIQGFLDTVAIPYTGCGVTASALTMDKALSKLCVSEAGIAVAPGVTVLAGDWEKSPEQILSSIPETLIYPVFVKPAHLGSSVGISKVSVQGELPEALAHACNLDTKVLIEQAMHGKEIEVAVLGNNDPIASACGEIEPGSDFYDYDDKYIHNTAKLFIPARLPEELSRRVQADALTAYRALGCRGMARVDFFVDEKSGQVVFNEINTIPGFTDISMYPQLMEAAGIAFPELCDRLLQLALEPEQPAKT.

The region spanning 144–350 (KLCVSEAGIA…FPELCDRLLQ (207 aa)) is the ATP-grasp domain. 177-232 (PETLIYPVFVKPAHLGSSVGISKVSVQGELPEALAHACNLDTKVLIEQAMHGKEIE) provides a ligand contact to ATP. Mg(2+)-binding residues include D303, E317, and N319.

Belongs to the D-alanine--D-alanine ligase family. Requires Mg(2+) as cofactor. Mn(2+) is required as a cofactor.

The protein resides in the cytoplasm. It carries out the reaction 2 D-alanine + ATP = D-alanyl-D-alanine + ADP + phosphate + H(+). Its pathway is cell wall biogenesis; peptidoglycan biosynthesis. Its function is as follows. Cell wall formation. In Chlorobium phaeovibrioides (strain DSM 265 / 1930) (Prosthecochloris vibrioformis (strain DSM 265)), this protein is D-alanine--D-alanine ligase.